The sequence spans 729 residues: Phosphoribosylformylglycinamidine synthase subunit PurL (729 aa).

The active site involves H54. ATP is bound by residues Y57 and K96. E98 serves as a coordination point for Mg(2+). Substrate is bound by residues 99–102 and R121; that span reads SHNH. The active-site Proton acceptor is the H100. Residue D122 coordinates Mg(2+). Substrate is bound at residue Q245. A Mg(2+)-binding site is contributed by D273. Substrate is bound at residue 317–319; that stretch reads ETQ. Residues D495 and G532 each contribute to the ATP site. N533 is a Mg(2+) binding site. Position 535 (S535) interacts with substrate.

It belongs to the FGAMS family. In terms of assembly, monomer. Part of the FGAM synthase complex composed of 1 PurL, 1 PurQ and 2 PurS subunits.

It is found in the cytoplasm. It catalyses the reaction N(2)-formyl-N(1)-(5-phospho-beta-D-ribosyl)glycinamide + L-glutamine + ATP + H2O = 2-formamido-N(1)-(5-O-phospho-beta-D-ribosyl)acetamidine + L-glutamate + ADP + phosphate + H(+). The protein operates within purine metabolism; IMP biosynthesis via de novo pathway; 5-amino-1-(5-phospho-D-ribosyl)imidazole from N(2)-formyl-N(1)-(5-phospho-D-ribosyl)glycinamide: step 1/2. Functionally, part of the phosphoribosylformylglycinamidine synthase complex involved in the purines biosynthetic pathway. Catalyzes the ATP-dependent conversion of formylglycinamide ribonucleotide (FGAR) and glutamine to yield formylglycinamidine ribonucleotide (FGAM) and glutamate. The FGAM synthase complex is composed of three subunits. PurQ produces an ammonia molecule by converting glutamine to glutamate. PurL transfers the ammonia molecule to FGAR to form FGAM in an ATP-dependent manner. PurS interacts with PurQ and PurL and is thought to assist in the transfer of the ammonia molecule from PurQ to PurL. The chain is Phosphoribosylformylglycinamidine synthase subunit PurL from Staphylococcus haemolyticus (strain JCSC1435).